The sequence spans 901 residues: Clathrin coat assembly protein AP180 (901 aa).

The 132-residue stretch at 14-145 (QYSVTGSAVA…FSYRQMAFDF (132 aa)) folds into the ENTH domain. 4 disordered regions span residues 285–326 (LEGK…DTSP), 397–424 (PISD…STTT), 497–522 (PETS…PSPA), and 573–606 (AAAP…PESS). A phosphoserine mark is found at serine 296, serine 300, and serine 306. A compositionally biased stretch (polar residues) spans 302–324 (LSKSSPATTVTSPNSTPAKTIDT). An O-linked (GlcNAc) threonine glycan is attached at threonine 310. The residue at position 313 (serine 313) is a Phosphoserine. Position 317 is a phosphothreonine (threonine 317). Composition is skewed to low complexity over residues 410–424 (TTTT…STTT) and 500–511 (SAPVVTPTASTA). Residues 512–522 (PPVPATAPSPA) are compositionally biased toward pro residues. Phosphoserine is present on residues serine 594, serine 600, serine 621, serine 627, and serine 761. Disordered stretches follow at residues 803–845 (SAGV…GMTM) and 857–901 (MMRP…KDFL). Low complexity predominate over residues 835 to 845 (GMPPSGTGMTM). At arginine 859 the chain carries Asymmetric dimethylarginine; alternate. Omega-N-methylarginine; alternate is present on arginine 859. The span at 870-882 (TQLSPSPTPATQS) shows a compositional bias: polar residues. A compositionally biased stretch (basic and acidic residues) spans 887-901 (PAKDPLADLNIKDFL).

The protein belongs to the PICALM/SNAP91 family. In terms of assembly, binds AP2A2. Interacts with AP2B1; clathrin competes with SNAP91. In terms of processing, thr-310 can be modified by the addition of N-acetylglucosamine which can be further phosphorylated. There is no evidence for direct Thr-310 phosphorylation. As to expression, brain. Associated with the synapses.

It is found in the cell membrane. It localises to the membrane. Its subcellular location is the coated pit. Its function is as follows. Adaptins are components of the adaptor complexes which link clathrin to receptors in coated vesicles. Clathrin-associated protein complexes are believed to interact with the cytoplasmic tails of membrane proteins, leading to their selection and concentration. Binding of AP180 to clathrin triskelia induces their assembly into 60-70 nm coats. This is Clathrin coat assembly protein AP180 (Snap91) from Mus musculus (Mouse).